The following is a 217-amino-acid chain: MTAALPSTLELLKDVHLGLPVPCHDPARLALLSGHYLYYHYGCDGLDDRGWGCGYRTLQTLCSWPGGQSSGVPGLPALQGALEAMGDKPPGFRGSRNWIGCVEASLCLEHFGGPQGRLCHLPRGVGLRGEEERLYSHFTTGGGPVMVGGDADAQSKALLGICEGPGSEVYVLILDPHYWGTPKNRCELQAAGWVGWQKVKSVFDSNSFYNLCFTRNL.

Catalysis depends on residues Cys-53, Asp-175, and His-177.

Belongs to the peptidase C78 family. As to expression, widely expressed. Expressed at higher level in brain, heart, kidney and skeletal muscle.

It is found in the cytoplasm. The protein localises to the cytosol. In terms of biological role, thiol-dependent isopeptidase that specifically mediate the processing of UFM1 precursors as well as the deconjugation of UFM1 from target proteins. Mainly responsible for the maturation of the UFM1 precursor, a prerequisite for conjugation reactions. The sequence is that of Ufm1-specific protease 1 from Mus musculus (Mouse).